A 227-amino-acid chain; its full sequence is NADH-quinone oxidoreductase subunit C (227 aa).

The protein belongs to the complex I 30 kDa subunit family. NDH-1 is composed of 14 different subunits. Subunits NuoB, C, D, E, F, and G constitute the peripheral sector of the complex.

The protein localises to the cell inner membrane. It carries out the reaction a quinone + NADH + 5 H(+)(in) = a quinol + NAD(+) + 4 H(+)(out). NDH-1 shuttles electrons from NADH, via FMN and iron-sulfur (Fe-S) centers, to quinones in the respiratory chain. The immediate electron acceptor for the enzyme in this species is believed to be ubiquinone. Couples the redox reaction to proton translocation (for every two electrons transferred, four hydrogen ions are translocated across the cytoplasmic membrane), and thus conserves the redox energy in a proton gradient. The chain is NADH-quinone oxidoreductase subunit C from Legionella pneumophila (strain Corby).